Consider the following 301-residue polypeptide: Phosphoribosylaminoimidazole-succinocarboxamide synthase (301 aa).

The protein belongs to the SAICAR synthetase family.

The catalysed reaction is 5-amino-1-(5-phospho-D-ribosyl)imidazole-4-carboxylate + L-aspartate + ATP = (2S)-2-[5-amino-1-(5-phospho-beta-D-ribosyl)imidazole-4-carboxamido]succinate + ADP + phosphate + 2 H(+). It participates in purine metabolism; IMP biosynthesis via de novo pathway; 5-amino-1-(5-phospho-D-ribosyl)imidazole-4-carboxamide from 5-amino-1-(5-phospho-D-ribosyl)imidazole-4-carboxylate: step 1/2. This Mycolicibacterium vanbaalenii (strain DSM 7251 / JCM 13017 / BCRC 16820 / KCTC 9966 / NRRL B-24157 / PYR-1) (Mycobacterium vanbaalenii) protein is Phosphoribosylaminoimidazole-succinocarboxamide synthase.